Here is a 176-residue protein sequence, read N- to C-terminus: Disulfide bond formation protein B (176 aa).

The Cytoplasmic segment spans residues 1–14 (MLRFLNRCSRGRGA). The chain crosses the membrane as a helical span at residues 15-31 (WLLLAFTALALELTALY). The Periplasmic segment spans residues 32–49 (FQHVMLLKPCVLCIYQRS). Cysteines 41 and 44 form a disulfide. A helical membrane pass occupies residues 50–65 (ALWGVFAAGIVGAIAP). The Cytoplasmic portion of the chain corresponds to 66–71 (SSLLRY). Residues 72–89 (PAIALWIYSSYEGIRLAW) traverse the membrane as a helical segment. Topologically, residues 90–144 (KHTDILLNPSPFTTCDFFVSFPSWLPLDKWLPAIFNATGDCSERQWSFLSMEMPQ) are periplasmic. Cys104 and Cys130 form a disulfide bridge. The chain crosses the membrane as a helical span at residues 145 to 163 (WLLGIFAAYLLIAVLVLIA). The Cytoplasmic segment spans residues 164 to 176 (QPFRSKRRDLFSR).

Belongs to the DsbB family.

It localises to the cell inner membrane. In terms of biological role, required for disulfide bond formation in some periplasmic proteins. Acts by oxidizing the DsbA protein. The chain is Disulfide bond formation protein B from Pectobacterium atrosepticum (strain SCRI 1043 / ATCC BAA-672) (Erwinia carotovora subsp. atroseptica).